Here is a 117-residue protein sequence, read N- to C-terminus: Large ribosomal subunit protein bL19 (117 aa).

The protein belongs to the bacterial ribosomal protein bL19 family.

Functionally, this protein is located at the 30S-50S ribosomal subunit interface and may play a role in the structure and function of the aminoacyl-tRNA binding site. In Aliivibrio fischeri (strain ATCC 700601 / ES114) (Vibrio fischeri), this protein is Large ribosomal subunit protein bL19.